We begin with the raw amino-acid sequence, 757 residues long: LPS-assembly protein LptD (757 aa).

Residues 1-21 (MRRLIPIAITGSLLWGAAVQA) form the signal peptide.

It belongs to the LptD family. Component of the lipopolysaccharide transport and assembly complex. Interacts with LptE and LptA.

The protein resides in the cell outer membrane. In terms of biological role, together with LptE, is involved in the assembly of lipopolysaccharide (LPS) at the surface of the outer membrane. In Alkalilimnicola ehrlichii (strain ATCC BAA-1101 / DSM 17681 / MLHE-1), this protein is LPS-assembly protein LptD.